The primary structure comprises 620 residues: Translation initiation factor IF-2 (620 aa).

The tr-type G domain occupies 126–295 (KRPPIVTIMG…IVTAEIMELK (170 aa)). Residues 135 to 142 (GHVDHGKT) are G1. 135–142 (GHVDHGKT) provides a ligand contact to GTP. Residues 160–164 (NITQS) form a G2 region. A G3 region spans residues 181–184 (DTPG). GTP contacts are provided by residues 181-185 (DTPGH) and 235-238 (NKMD). Residues 235–238 (NKMD) are G4. The G5 stretch occupies residues 271–273 (SAL).

This sequence belongs to the TRAFAC class translation factor GTPase superfamily. Classic translation factor GTPase family. IF-2 subfamily.

Its subcellular location is the cytoplasm. One of the essential components for the initiation of protein synthesis. Protects formylmethionyl-tRNA from spontaneous hydrolysis and promotes its binding to the 30S ribosomal subunits. Also involved in the hydrolysis of GTP during the formation of the 70S ribosomal complex. The protein is Translation initiation factor IF-2 of Malacoplasma penetrans (strain HF-2) (Mycoplasma penetrans).